A 769-amino-acid chain; its full sequence is Discoidin, CUB and LCCL domain-containing protein 2 (769 aa).

Positions 1 to 29 (MASRAPLRAARSPQDPGGRAAPAATGRAP) are enriched in low complexity. The interval 1 to 39 (MASRAPLRAARSPQDPGGRAAPAATGRAPLPSAGWCPLP) is disordered. The first 63 residues, 1–63 (MASRAPLRAA…LLLLLPDAGA (63 aa)), serve as a signal peptide directing secretion. The Extracellular segment spans residues 64 to 523 (QKGDGCGHTV…VTPSVTKDVA (460 aa)). Disulfide bonds link Cys69-Cys96 and Cys123-Cys145. One can recognise a CUB domain in the interval 69-184 (CGHTVLGPES…RGFLASYSVI (116 aa)). N-linked (GlcNAc...) asparagine glycosylation occurs at Asn92. A glycan (N-linked (GlcNAc...) asparagine) is linked at Asn152. In terms of domain architecture, LCCL spans 184-282 (IDKQDLITCL…MVGYLSTSLF (99 aa)). A disulfide bridge connects residues Cys212 and Cys234. N-linked (GlcNAc...) asparagine glycosylation occurs at Asn269. A disulfide bridge connects residues Cys289 and Cys446. The region spanning 289 to 446 (CYGTLGMESG…IAMKVELLGC (158 aa)) is the F5/8 type C domain. Positions 455 to 476 (PKLTQPPPPRNSNNLKNTTVHP) are disordered. Residues 465–474 (NSNNLKNTTV) show a composition bias toward polar residues. N-linked (GlcNAc...) asparagine glycosylation is found at Asn471 and Asn511. Residues 524 to 544 (LAAVLVPVLVMALTTLILILV) traverse the membrane as a helical segment. Residues 545-769 (CAWHWRNRKK…EKFDAFKETL (225 aa)) are Cytoplasmic-facing. Ser601 bears the Phosphoserine mark. The tract at residues 719–769 (SCSSGQAQYDTPKGGKPAAAPEELVYQVPQSTQEASGAGRDEKFDAFKETL) is disordered. Over residues 757 to 769 (GRDEKFDAFKETL) the composition is skewed to basic and acidic residues.

It is found in the membrane. This chain is Discoidin, CUB and LCCL domain-containing protein 2 (Dcbld2), found in Rattus norvegicus (Rat).